The primary structure comprises 87 residues: Cytochrome c6 (87 aa).

Residues Cys-10, Cys-13, His-14, and Met-56 each coordinate heme c.

The protein belongs to the cytochrome c family. PetJ subfamily. Monomer. In terms of processing, binds 1 heme c group covalently per subunit.

It localises to the plastid. The protein localises to the chloroplast thylakoid lumen. Functionally, functions as an electron carrier between membrane-bound cytochrome b6-f and photosystem I in oxygenic photosynthesis. The chain is Cytochrome c6 (petJ) from Euglena viridis (Cercaria viridis).